Here is a 66-residue protein sequence, read N- to C-terminus: Large ribosomal subunit protein bL31 (66 aa).

The Zn(2+) site is built by C16, C18, C36, and C39.

The protein belongs to the bacterial ribosomal protein bL31 family. Type A subfamily. Part of the 50S ribosomal subunit. The cofactor is Zn(2+).

Its function is as follows. Binds the 23S rRNA. This Trichlorobacter lovleyi (strain ATCC BAA-1151 / DSM 17278 / SZ) (Geobacter lovleyi) protein is Large ribosomal subunit protein bL31.